Consider the following 463-residue polypeptide: Putative F-box protein At3g29830 (463 aa).

The F-box domain maps to 7–55 (RDRISSLPDVVLVMILSFLSFKDNVKTSILSKRWRNICYEAKNISFKES).

This is Putative F-box protein At3g29830 from Arabidopsis thaliana (Mouse-ear cress).